Here is a 314-residue protein sequence, read N- to C-terminus: Probable 5-dehydro-4-deoxyglucarate dehydratase (314 aa).

Belongs to the DapA family.

It catalyses the reaction 5-dehydro-4-deoxy-D-glucarate + H(+) = 2,5-dioxopentanoate + CO2 + H2O. It participates in carbohydrate acid metabolism; D-glucarate degradation; 2,5-dioxopentanoate from D-glucarate: step 2/2. The sequence is that of Probable 5-dehydro-4-deoxyglucarate dehydratase from Bradyrhizobium sp. (strain ORS 278).